The primary structure comprises 276 residues: NH(3)-dependent NAD(+) synthetase (276 aa).

43 to 50 (GISGGVDS) lines the ATP pocket. Asp-49 contributes to the Mg(2+) binding site. Arg-146 is a binding site for deamido-NAD(+). Thr-166 serves as a coordination point for ATP. Glu-171 is a binding site for Mg(2+). The deamido-NAD(+) site is built by Lys-179 and Asp-186. ATP-binding residues include Lys-195 and Thr-217. Deamido-NAD(+) is bound at residue 266 to 267 (HK).

It belongs to the NAD synthetase family. In terms of assembly, homodimer.

It catalyses the reaction deamido-NAD(+) + NH4(+) + ATP = AMP + diphosphate + NAD(+) + H(+). Its pathway is cofactor biosynthesis; NAD(+) biosynthesis; NAD(+) from deamido-NAD(+) (ammonia route): step 1/1. Catalyzes the ATP-dependent amidation of deamido-NAD to form NAD. Uses ammonia as a nitrogen source. This is NH(3)-dependent NAD(+) synthetase from Vibrio vulnificus (strain YJ016).